A 236-amino-acid chain; its full sequence is 2-C-methyl-D-erythritol 4-phosphate cytidylyltransferase (236 aa).

This sequence belongs to the IspD/TarI cytidylyltransferase family. IspD subfamily. In terms of assembly, homodimer.

It catalyses the reaction 2-C-methyl-D-erythritol 4-phosphate + CTP + H(+) = 4-CDP-2-C-methyl-D-erythritol + diphosphate. It participates in isoprenoid biosynthesis; isopentenyl diphosphate biosynthesis via DXP pathway; isopentenyl diphosphate from 1-deoxy-D-xylulose 5-phosphate: step 2/6. Functionally, catalyzes the formation of 4-diphosphocytidyl-2-C-methyl-D-erythritol from CTP and 2-C-methyl-D-erythritol 4-phosphate (MEP). The chain is 2-C-methyl-D-erythritol 4-phosphate cytidylyltransferase from Salmonella typhimurium (strain LT2 / SGSC1412 / ATCC 700720).